The primary structure comprises 308 residues: Tetraacyldisaccharide 4'-kinase (308 aa).

An ATP-binding site is contributed by 63-70 (SFGGNGKT).

This sequence belongs to the LpxK family.

The catalysed reaction is a lipid A disaccharide + ATP = a lipid IVA + ADP + H(+). The protein operates within glycolipid biosynthesis; lipid IV(A) biosynthesis; lipid IV(A) from (3R)-3-hydroxytetradecanoyl-[acyl-carrier-protein] and UDP-N-acetyl-alpha-D-glucosamine: step 6/6. Transfers the gamma-phosphate of ATP to the 4'-position of a tetraacyldisaccharide 1-phosphate intermediate (termed DS-1-P) to form tetraacyldisaccharide 1,4'-bis-phosphate (lipid IVA). The polypeptide is Tetraacyldisaccharide 4'-kinase (Campylobacter jejuni subsp. jejuni serotype O:6 (strain 81116 / NCTC 11828)).